The sequence spans 148 residues: uncharacterized protein (148 aa).

2 consecutive transmembrane segments (helical) span residues 16-36 (IVGA…SIIL) and 41-61 (LSFS…AYIF).

This sequence to M.jannaschii MJ0696.

Its subcellular location is the cell membrane. This is an uncharacterized protein from Methanocaldococcus jannaschii (strain ATCC 43067 / DSM 2661 / JAL-1 / JCM 10045 / NBRC 100440) (Methanococcus jannaschii).